Reading from the N-terminus, the 812-residue chain is Eukaryotic translation initiation factor 3 subunit C (812 aa).

The disordered stretch occupies residues 1 to 105 (MSRFFSRGYH…SDESDDEGKK (105 aa)). Acidic residues-rich tracts occupy residues 17–40 (SEDE…EVVS) and 48–59 (SESESAESDDDS). The PCI domain maps to 607 to 783 (FHQHINLDLI…EMLIFDKGDE (177 aa)).

The protein belongs to the eIF-3 subunit C family. Component of the eukaryotic translation initiation factor 3 (eIF-3) complex.

The protein localises to the cytoplasm. Functionally, component of the eukaryotic translation initiation factor 3 (eIF-3) complex, which is involved in protein synthesis of a specialized repertoire of mRNAs and, together with other initiation factors, stimulates binding of mRNA and methionyl-tRNAi to the 40S ribosome. The eIF-3 complex specifically targets and initiates translation of a subset of mRNAs involved in cell proliferation. The protein is Eukaryotic translation initiation factor 3 subunit C of Eremothecium gossypii (strain ATCC 10895 / CBS 109.51 / FGSC 9923 / NRRL Y-1056) (Yeast).